The primary structure comprises 493 residues: Glycerol kinase 2 (493 aa).

S12 contacts ADP. ATP-binding residues include S12 and T13. Sn-glycerol 3-phosphate is bound at residue S12. K16 contributes to the ADP binding site. Sn-glycerol 3-phosphate-binding residues include R82, E83, Y134, and D243. R82, E83, Y134, D243, and Q244 together coordinate glycerol. T265 and G308 together coordinate ADP. Residues T265, G308, and N312 each coordinate ATP. N413 lines the ADP pocket.

The protein belongs to the FGGY kinase family. In terms of assembly, homotetramer and homodimer (in equilibrium).

The catalysed reaction is glycerol + ATP = sn-glycerol 3-phosphate + ADP + H(+). It participates in polyol metabolism; glycerol degradation via glycerol kinase pathway; sn-glycerol 3-phosphate from glycerol: step 1/1. Its activity is regulated as follows. Activated by phosphorylation and inhibited by fructose 1,6-bisphosphate (FBP). In terms of biological role, key enzyme in the regulation of glycerol uptake and metabolism. Catalyzes the phosphorylation of glycerol to yield sn-glycerol 3-phosphate. This is Glycerol kinase 2 from Clostridium tetani (strain Massachusetts / E88).